The sequence spans 144 residues: UPF0547 protein C16orf87 homolog (144 aa).

The disordered stretch occupies residues 33-112 (HAKQSQRLPP…EEKEKQEKEV (80 aa)). Residues 35-45 (KQSQRLPPTSE) show a composition bias toward polar residues. Basic residues predominate over residues 50–62 (PKRRRTERIKRER). Basic and acidic residues-rich tracts occupy residues 63-74 (IHTAVNRDLENR) and 99-112 (KKHE…EKEV). Residues 94–122 (KTATTKKHEEEKEKQEKEVDMYANLSDEK) are a coiled coil.

Belongs to the UPF0547 family.

This Xenopus laevis (African clawed frog) protein is UPF0547 protein C16orf87 homolog.